The sequence spans 205 residues: GTP cyclohydrolase-2 (205 aa).

49-53 contributes to the GTP binding site; the sequence is RLHSE. Residues C54, C65, and C67 each coordinate Zn(2+). GTP-binding positions include Q70, 92–94, and T114; that span reads EGR. The active-site Proton acceptor is the D126. R128 acts as the Nucleophile in catalysis. T149 and K154 together coordinate GTP.

It belongs to the GTP cyclohydrolase II family. Zn(2+) is required as a cofactor.

It carries out the reaction GTP + 4 H2O = 2,5-diamino-6-hydroxy-4-(5-phosphoribosylamino)-pyrimidine + formate + 2 phosphate + 3 H(+). Its pathway is cofactor biosynthesis; riboflavin biosynthesis; 5-amino-6-(D-ribitylamino)uracil from GTP: step 1/4. In terms of biological role, catalyzes the conversion of GTP to 2,5-diamino-6-ribosylamino-4(3H)-pyrimidinone 5'-phosphate (DARP), formate and pyrophosphate. This chain is GTP cyclohydrolase-2, found in Pseudomonas entomophila (strain L48).